The chain runs to 254 residues: 4-hydroxy-tetrahydrodipicolinate reductase (254 aa).

G7 to I12 serves as a coordination point for NAD(+). Residue R35 coordinates NADP(+). NAD(+) is bound by residues G91–T93 and A115–M118. Catalysis depends on H147, which acts as the Proton donor/acceptor. H148 is a binding site for (S)-2,3,4,5-tetrahydrodipicolinate. K151 functions as the Proton donor in the catalytic mechanism. Residue G157–T158 coordinates (S)-2,3,4,5-tetrahydrodipicolinate.

The protein belongs to the DapB family.

Its subcellular location is the cytoplasm. The enzyme catalyses (S)-2,3,4,5-tetrahydrodipicolinate + NAD(+) + H2O = (2S,4S)-4-hydroxy-2,3,4,5-tetrahydrodipicolinate + NADH + H(+). The catalysed reaction is (S)-2,3,4,5-tetrahydrodipicolinate + NADP(+) + H2O = (2S,4S)-4-hydroxy-2,3,4,5-tetrahydrodipicolinate + NADPH + H(+). It participates in amino-acid biosynthesis; L-lysine biosynthesis via DAP pathway; (S)-tetrahydrodipicolinate from L-aspartate: step 4/4. Functionally, catalyzes the conversion of 4-hydroxy-tetrahydrodipicolinate (HTPA) to tetrahydrodipicolinate. In Helicobacter pylori (strain G27), this protein is 4-hydroxy-tetrahydrodipicolinate reductase.